A 352-amino-acid polypeptide reads, in one-letter code: MLMNSIYSFTLQELKKELTKNNIKAFVAEQIFDWIYSKHVDSFDEMKNISKENIEKLKQLFSFENMVVDKLQVDKHDGTVKFLLKLEDGNFIETVIMKFNYGYSVCVTSQIGCNMACKFCASGLIRKKRNITVGEFIKQFIIAKEYVEKNFNDKLTHMVVMGIGEPFDNFENLIQFFEVIKQQKGLCISPRKITVSTCGLVEKIKEFADLKNQVNLAILLHAPNNEIRNKIMPINKVYSLDKVIEAMDYYIKVTKRRVTIEYILIKDVNDSDENAVELAKLLKGKLCYVNLIPYNKVVENNYFRSVRGKQFFDVLKKNNIQATIRLERGSSIDAACGQLRIKKILELRNAKV.

The Proton acceptor role is filled by Glu-93. A Radical SAM core domain is found at 99–333; that stretch reads FNYGYSVCVT…IRLERGSSID (235 aa). A disulfide bond links Cys-106 and Cys-336. Residues Cys-113, Cys-117, and Cys-120 each coordinate [4Fe-4S] cluster. S-adenosyl-L-methionine contacts are provided by residues 164 to 165, Ser-196, and Asn-295; that span reads GE. Catalysis depends on Cys-336, which acts as the S-methylcysteine intermediate.

Belongs to the radical SAM superfamily. RlmN family. Requires [4Fe-4S] cluster as cofactor.

Its subcellular location is the cytoplasm. It carries out the reaction adenosine(2503) in 23S rRNA + 2 reduced [2Fe-2S]-[ferredoxin] + 2 S-adenosyl-L-methionine = 2-methyladenosine(2503) in 23S rRNA + 5'-deoxyadenosine + L-methionine + 2 oxidized [2Fe-2S]-[ferredoxin] + S-adenosyl-L-homocysteine. The enzyme catalyses adenosine(37) in tRNA + 2 reduced [2Fe-2S]-[ferredoxin] + 2 S-adenosyl-L-methionine = 2-methyladenosine(37) in tRNA + 5'-deoxyadenosine + L-methionine + 2 oxidized [2Fe-2S]-[ferredoxin] + S-adenosyl-L-homocysteine. Specifically methylates position 2 of adenine 2503 in 23S rRNA and position 2 of adenine 37 in tRNAs. This Malacoplasma penetrans (strain HF-2) (Mycoplasma penetrans) protein is Probable dual-specificity RNA methyltransferase RlmN.